The primary structure comprises 701 residues: C6 finger domain transcription factor nscR (701 aa).

The zn(2)-C6 fungal-type DNA-binding region spans 17–43; sequence CELCRERKVKCDKLDPCTNCSSAGVIC.

Its subcellular location is the nucleus. In terms of biological role, transcription factor that specifically regulates the neosartoricin B biosynthesis gene cluster. In Arthroderma benhamiae (strain ATCC MYA-4681 / CBS 112371) (Trichophyton mentagrophytes), this protein is C6 finger domain transcription factor nscR.